We begin with the raw amino-acid sequence, 584 residues long: MRTKYCGNIRIIDLHKSVILCGWVHKIRNFSQFIFIDMRDWTGIVQLVFEKKNNKVFTKAVNLKNESCIQVIGIVKKRNANNNNLDTGEIEILVNKIKVFNISKNLPLDYSNNSNDDIRLKYRYLDLRRSELLENLKIRNKITHLIRIFMENKNFLDIETPFLTKSTPEGARDYLVPSRNYPGNFYALPQSPQLFKQILMISGIDKYYQIVKCFRDEDLRSDRQPEFTQIDIEASFVSSTKIRNLVETLIKKIWLKVINYNLNKFPKISFYDSMKRYGSDKPDLRNPMEIVDISDIVIEEKVASFFQINLKKKNRIALLCFGQGNKISQKKIDEYSNYVKKFGAKKLFYIKINKIENRFQDIQSSIKNILDKNTLENILRKTNAKNGNILFLLADEEKIVNKSLGMLRIKLGNDFIFFKKNTWKPVWIVDFPMFKQNSDGKFSSNHHPFTALKKNNQNKLEKNPNLAISDSYDLVINGYEIGGGSVRIHDAKIQKKVFNIIGIEKQFQREKFGFLIEALKYGPPPHAGIALGLDRIVMLLTNTNNIRDVIAFPKTTSANCLMTDSPSKLKKSILNELGINILKK.

Glu169 provides a ligand contact to L-aspartate. The interval 193–196 (QLFK) is aspartate. Arg215 lines the L-aspartate pocket. Residues 215–217 (RDE) and Gln224 contribute to the ATP site. Residue His446 participates in L-aspartate binding. Glu480 lines the ATP pocket. Arg487 serves as a coordination point for L-aspartate. An ATP-binding site is contributed by 532 to 535 (GLDR).

The protein belongs to the class-II aminoacyl-tRNA synthetase family. Type 1 subfamily. In terms of assembly, homodimer.

It localises to the cytoplasm. The catalysed reaction is tRNA(Asp) + L-aspartate + ATP = L-aspartyl-tRNA(Asp) + AMP + diphosphate. Catalyzes the attachment of L-aspartate to tRNA(Asp) in a two-step reaction: L-aspartate is first activated by ATP to form Asp-AMP and then transferred to the acceptor end of tRNA(Asp). This is Aspartate--tRNA ligase from Buchnera aphidicola subsp. Schizaphis graminum (strain Sg).